The sequence spans 210 residues: Imidazole glycerol phosphate synthase subunit HisH (210 aa).

The Glutamine amidotransferase type-1 domain occupies methionine 1–glycine 205. The Nucleophile role is filled by cysteine 79. Catalysis depends on residues histidine 180 and glutamate 182.

As to quaternary structure, heterodimer of HisH and HisF.

The protein resides in the cytoplasm. The catalysed reaction is 5-[(5-phospho-1-deoxy-D-ribulos-1-ylimino)methylamino]-1-(5-phospho-beta-D-ribosyl)imidazole-4-carboxamide + L-glutamine = D-erythro-1-(imidazol-4-yl)glycerol 3-phosphate + 5-amino-1-(5-phospho-beta-D-ribosyl)imidazole-4-carboxamide + L-glutamate + H(+). The enzyme catalyses L-glutamine + H2O = L-glutamate + NH4(+). It functions in the pathway amino-acid biosynthesis; L-histidine biosynthesis; L-histidine from 5-phospho-alpha-D-ribose 1-diphosphate: step 5/9. In terms of biological role, IGPS catalyzes the conversion of PRFAR and glutamine to IGP, AICAR and glutamate. The HisH subunit catalyzes the hydrolysis of glutamine to glutamate and ammonia as part of the synthesis of IGP and AICAR. The resulting ammonia molecule is channeled to the active site of HisF. The protein is Imidazole glycerol phosphate synthase subunit HisH of Herpetosiphon aurantiacus (strain ATCC 23779 / DSM 785 / 114-95).